The sequence spans 677 residues: DNA ligase (677 aa).

NAD(+)-binding positions include 35-39, 84-85, and Glu115; these read DAVYD and SL. Lys117 functions as the N6-AMP-lysine intermediate in the catalytic mechanism. NAD(+)-binding residues include Arg138, Glu177, Lys296, and Lys320. Zn(2+) is bound by residues Cys414, Cys417, Cys432, and Cys437. Positions 599-677 constitute a BRCT domain; sequence NGILKLNGKT…ETQLLEILEE (79 aa).

The protein belongs to the NAD-dependent DNA ligase family. LigA subfamily. Mg(2+) is required as a cofactor. Mn(2+) serves as cofactor.

The enzyme catalyses NAD(+) + (deoxyribonucleotide)n-3'-hydroxyl + 5'-phospho-(deoxyribonucleotide)m = (deoxyribonucleotide)n+m + AMP + beta-nicotinamide D-nucleotide.. In terms of biological role, DNA ligase that catalyzes the formation of phosphodiester linkages between 5'-phosphoryl and 3'-hydroxyl groups in double-stranded DNA using NAD as a coenzyme and as the energy source for the reaction. It is essential for DNA replication and repair of damaged DNA. The sequence is that of DNA ligase from Nostoc sp. (strain PCC 7120 / SAG 25.82 / UTEX 2576).